We begin with the raw amino-acid sequence, 548 residues long: Glucose-6-phosphate isomerase (548 aa).

E355 acts as the Proton donor in catalysis. Catalysis depends on residues H386 and K514.

The protein belongs to the GPI family.

Its subcellular location is the cytoplasm. The enzyme catalyses alpha-D-glucose 6-phosphate = beta-D-fructose 6-phosphate. It participates in carbohydrate biosynthesis; gluconeogenesis. It functions in the pathway carbohydrate degradation; glycolysis; D-glyceraldehyde 3-phosphate and glycerone phosphate from D-glucose: step 2/4. Functionally, catalyzes the reversible isomerization of glucose-6-phosphate to fructose-6-phosphate. The protein is Glucose-6-phosphate isomerase of Photorhabdus laumondii subsp. laumondii (strain DSM 15139 / CIP 105565 / TT01) (Photorhabdus luminescens subsp. laumondii).